The chain runs to 400 residues: Nicotinate phosphoribosyltransferase (400 aa).

The residue at position 220 (H220) is a Phosphohistidine; by autocatalysis.

It belongs to the NAPRTase family. Transiently phosphorylated on a His residue during the reaction cycle. Phosphorylation strongly increases the affinity for substrates and increases the rate of nicotinate D-ribonucleotide production. Dephosphorylation regenerates the low-affinity form of the enzyme, leading to product release.

The catalysed reaction is nicotinate + 5-phospho-alpha-D-ribose 1-diphosphate + ATP + H2O = nicotinate beta-D-ribonucleotide + ADP + phosphate + diphosphate. The protein operates within cofactor biosynthesis; NAD(+) biosynthesis; nicotinate D-ribonucleotide from nicotinate: step 1/1. Catalyzes the synthesis of beta-nicotinate D-ribonucleotide from nicotinate and 5-phospho-D-ribose 1-phosphate at the expense of ATP. This Escherichia fergusonii (strain ATCC 35469 / DSM 13698 / CCUG 18766 / IAM 14443 / JCM 21226 / LMG 7866 / NBRC 102419 / NCTC 12128 / CDC 0568-73) protein is Nicotinate phosphoribosyltransferase.